The primary structure comprises 143 residues: Putative phosphotransferase IIA component SgcA (143 aa).

Residues 1–143 (MINDIKWVQA…DDALFALVSG (143 aa)) enclose the PTS EIIA type-2 domain. The active-site Tele-phosphohistidine intermediate is the His63.

The protein localises to the cytoplasm. The phosphoenolpyruvate-dependent sugar phosphotransferase system (sugar PTS), a major carbohydrate active -transport system, catalyzes the phosphorylation of incoming sugar substrates concomitantly with their translocation across the cell membrane. The polypeptide is Putative phosphotransferase IIA component SgcA (sgcA) (Escherichia coli (strain K12)).